The sequence spans 443 residues: Chromosome partition protein MukF (443 aa).

Positions 209–237 are leucine-zipper; the sequence is LDETSGNLRELQDTLNAAGDKLQAQLLRI.

It belongs to the MukF family. In terms of assembly, interacts, and probably forms a ternary complex, with MukE and MukB via its C-terminal region. The complex formation is stimulated by calcium or magnesium. It is required for an interaction between MukE and MukB.

The protein localises to the cytoplasm. It is found in the nucleoid. Its function is as follows. Involved in chromosome condensation, segregation and cell cycle progression. May participate in facilitating chromosome segregation by condensation DNA from both sides of a centrally located replisome during cell division. Not required for mini-F plasmid partitioning. Probably acts via its interaction with MukB and MukE. Overexpression results in anucleate cells. It has a calcium binding activity. This chain is Chromosome partition protein MukF, found in Actinobacillus pleuropneumoniae serotype 5b (strain L20).